A 442-amino-acid chain; its full sequence is Syndecan-3 (442 aa).

Disordered stretches follow at residues 1–25 (MKPG…APGA) and 47–80 (RWRN…YSGS). The first 44 residues, 1–44 (MKPGPPRRGTAQGQRVDTATHAPGARGLLLPPLLLLLLAGRAAG), serve as a signal peptide directing secretion. The Extracellular portion of the chain corresponds to 45 to 387 (AQRWRNENFE…SILERKEVLV (343 aa)). Residues 48–58 (WRNENFERPVD) are compositionally biased toward basic and acidic residues. A compositionally biased stretch (acidic residues) spans 61–75 (GSGDDDSFPDDELDD). O-linked (Xyl...) (glycosaminoglycan) serine glycosylation is found at S78, S80, S82, and S89. The O-linked (GalNAc) threonine; by GALNT13 glycan is linked to T107. Disordered regions lie at residues 152–199 (ESSQ…PATA), 253–293 (ATSR…AQTP), and 305–327 (EPEV…TTQP). Composition is skewed to low complexity over residues 157–199 (ATTI…PATA) and 276–287 (TLPLGTTAPGPT). S161 carries an O-linked (GalNAc) serine; by GALNT13 glycan. Residues T162, T163, T170, and T172 are each glycosylated (O-linked (GalNAc) threonine; by GALNT13). O-linked (Xyl...) (glycosaminoglycan) serine glycans are attached at residues S315 and S367. Residues 388–408 (AVIVGGVVGALFAAFLVTLLI) form a helical membrane-spanning segment. Y409, Y419, Y431, and Y441 each carry phosphotyrosine. Over 409-442 (YRMKKKDEGSYTLEEPKQASVTYQKPDKQEEFYA) the chain is Cytoplasmic. Positions 419–442 (YTLEEPKQASVTYQKPDKQEEFYA) are disordered. Residues 433–442 (KPDKQEEFYA) show a composition bias toward basic and acidic residues.

This sequence belongs to the syndecan proteoglycan family. As to quaternary structure, interacts with TIAM1. Interacts with PTN (via heparan sulfate chains); this interaction mediates the neurite outgrowth-promoting signal from PTN to the cytoskeleton of growing neurites; this interaction mediates osteoblast recruitment. Interacts with MDK; this interaction induces SDC3 clustering; this interaction induces neuronal cell adhesion and neurite outgrowth. In terms of processing, O-glycosylated within the Thr/Ser-rich region which could interact with lectin domains on other molecules.

The protein localises to the cell membrane. Cell surface proteoglycan that may bear heparan sulfate. May have a role in the organization of cell shape by affecting the actin cytoskeleton, possibly by transferring signals from the cell surface in a sugar-dependent mechanism. The sequence is that of Syndecan-3 (Sdc3) from Mus musculus (Mouse).